Reading from the N-terminus, the 466-residue chain is Argininosuccinate lyase (466 aa).

Ser27, Asn114, and Thr159 together coordinate 2-(N(omega)-L-arginino)succinate. Residue His160 is the Proton acceptor of the active site. Ser281 serves as the catalytic Proton donor. 4 residues coordinate 2-(N(omega)-L-arginino)succinate: Asn289, Tyr321, Gln326, and Lys329.

The protein belongs to the lyase 1 family. Argininosuccinate lyase subfamily. In terms of assembly, homotetramer. Eye lens.

The enzyme catalyses 2-(N(omega)-L-arginino)succinate = fumarate + L-arginine. Its pathway is amino-acid biosynthesis; L-arginine biosynthesis; L-arginine from L-ornithine and carbamoyl phosphate: step 3/3. In terms of biological role, delta crystallin, the principal crystallin in embryonic lens, is found only in birds and reptiles. This protein also functions as an enzymatically active argininosuccinate lyase. In Anser anser anser (Western greylag goose), this protein is Argininosuccinate lyase (ASL).